The sequence spans 1131 residues: MAKMKIHELAKELGVDNNVIVNFLQSKGSEVKSYRNNIEEKEIDLVRGKFKGSVSSNEPKSIDNGKASRVEKPEKNNSVTAKADQTPSEPVVHKQRPMTAQGERKNMSEQNVTTGSTESEDNIQSVGDRKYQHTDRRPQGNNGEGPQTSTNSGDRRPQGQGSYGDRRPQGQNSGDRRPYNGDRPQGQNSGDRRPYNGDRPQGQNSGDRRPYNGDRPQGQGNYGDRRPQGQNSGDRRPYNGDRPQGQGNYGDRRPQGQGSYGDRRPNSGDRPQGQGNYGDRRPQGQGSYGDRRPQGQGSYGDRPQGQGSYGDRPQGQGSYGDRRPQGQGSYGDRRPQGQGSYGDRPQGQGSYGDRRPQGQGSYGDRPQGQGNYGDRRPGGQGSYGDRRPQGQGSYGDRPQGQGNFGDRRPQGQGGYGGRPQGQGSYGGRPQGQGGYAGRSQGQGSFGGFNKDFDKDKDSGYTRSFDKKRTDPKSGEKSSIKSDLANELTKEQRAAAFNDKSRDRDRNRDRGRNNVEDGNIKSAKGKKDPNRKGAFIMPKPQQSLEKQDEIKTVIIPEVLTIKELADKMKVVPSVVVKKLFLAGKMVSINSEITFEEAEEIALGYEIIAEKEVLVNKVEELLKEDDEDENLMVKRPPVVCVMGHVDHGKTSLLDAIREANVTSREAGGITQHIGAYTVEVNGEKITFLDTPGHEAFTSMRMRGAKSTDIAILVVAADDGVMPQTVEAISHAKAAGVQIIVAINKIDKPSANIERVKQELTEHELIAEDWGGDTIFVPVSAHTKEGIDQLLEMIILTAEMGELKANPDRMARGIVIEAELDKGRGTVATILVQKGTLHVGDNIVIGSTYGKVRAMMDDKGRRVKEATPSTPVEILGLNAVPNAGEIFMATENEKEARNIADAFISQGKERLLADTKAKLSLDGLFSQIQAGNIKELNLIVKADVQGSVEAVKQSLVKLSNEEVAVRIIHGGVGAINESDVMLASTSNAIIIGFNVRPDNMAREIAEREKVDLRLYRVIYSAIEDVEAAMKGMLDPTFEEKVMGHAEVRQVFKASGLGTIAGSYVLDGKIVRGCSARITREGTQIFEGALASLKRFKDDVKEVNTGYECGLVFEKFNDIQEYDLVELYMMVEVPR.

Positions 49–542 (KFKGSVSSNE…AFIMPKPQQS (494 aa)) are disordered. Positions 60–75 (KSIDNGKASRVEKPEK) are enriched in basic and acidic residues. 2 stretches are compositionally biased toward polar residues: residues 76-88 (NNSVTAKADQTPS) and 108-125 (SEQNVTTGSTESEDNIQS). The segment covering 127 to 138 (GDRKYQHTDRRP) has biased composition (basic and acidic residues). A compositionally biased stretch (polar residues) spans 139 to 152 (QGNNGEGPQTSTNS). Basic and acidic residues-rich tracts occupy residues 164–180 (GDRRPQGQNSGDRRPYN) and 223–239 (GDRRPQGQNSGDRRPYN). The span at 411 to 436 (GQGGYGGRPQGQGSYGGRPQGQGGYA) shows a compositional bias: gly residues. 2 stretches are compositionally biased toward basic and acidic residues: residues 450–479 (KDFDKDKDSGYTRSFDKKRTDPKSGEKSSI) and 487–530 (LTKE…DPNR). In terms of domain architecture, tr-type G spans 632–801 (KRPPVVCVMG…ILTAEMGELK (170 aa)). The tract at residues 641–648 (GHVDHGKT) is G1. 641–648 (GHVDHGKT) contributes to the GTP binding site. The G2 stretch occupies residues 666–670 (GITQH). The segment at 687-690 (DTPG) is G3. GTP is bound by residues 687–691 (DTPGH) and 741–744 (NKID). Residues 741 to 744 (NKID) form a G4 region. The interval 777-779 (SAH) is G5.

Belongs to the TRAFAC class translation factor GTPase superfamily. Classic translation factor GTPase family. IF-2 subfamily.

Its subcellular location is the cytoplasm. In terms of biological role, one of the essential components for the initiation of protein synthesis. Protects formylmethionyl-tRNA from spontaneous hydrolysis and promotes its binding to the 30S ribosomal subunits. Also involved in the hydrolysis of GTP during the formation of the 70S ribosomal complex. This is Translation initiation factor IF-2 from Lachnoclostridium phytofermentans (strain ATCC 700394 / DSM 18823 / ISDg) (Clostridium phytofermentans).